We begin with the raw amino-acid sequence, 50 residues long: Fungus-induced-related protein 15 (50 aa).

Positions 1–21 are cleaved as a signal peptide; the sequence is MNFYSLFVFIALIFSFNVVHG.

In terms of biological role, may have role in hypoxia response. This is Fungus-induced-related protein 15 (fipr-15) from Caenorhabditis elegans.